The primary structure comprises 116 residues: UPF0654 protein C869.09 (116 aa).

Residues 32 to 116 are disordered; sequence LKEHGSESHY…LLEEVDDESK (85 aa). Positions 39 to 48 are enriched in polar residues; sequence SHYTTGTTRG. Basic and acidic residues predominate over residues 49–64; the sequence is QKADADDAGELREEGF.

The protein belongs to the UPF0654 (con-6) family.

Its subcellular location is the cytoplasm. The protein localises to the nucleus. This chain is UPF0654 protein C869.09, found in Schizosaccharomyces pombe (strain 972 / ATCC 24843) (Fission yeast).